The following is a 296-amino-acid chain: Ribonuclease HIII (296 aa).

The RNase H type-2 domain occupies 80 to 296; sequence LALIGSDEVG…NTKKAYQRLK (217 aa). Aspartate 86, glutamate 87, and aspartate 191 together coordinate a divalent metal cation.

It belongs to the RNase HII family. RnhC subfamily. The cofactor is Mn(2+). It depends on Mg(2+) as a cofactor.

The protein localises to the cytoplasm. It carries out the reaction Endonucleolytic cleavage to 5'-phosphomonoester.. In terms of biological role, endonuclease that specifically degrades the RNA of RNA-DNA hybrids. This is Ribonuclease HIII from Streptococcus thermophilus (strain ATCC BAA-250 / LMG 18311).